Reading from the N-terminus, the 564-residue chain is Proline--tRNA ligase (564 aa).

The protein belongs to the class-II aminoacyl-tRNA synthetase family. ProS type 1 subfamily. Homodimer.

Its subcellular location is the cytoplasm. The catalysed reaction is tRNA(Pro) + L-proline + ATP = L-prolyl-tRNA(Pro) + AMP + diphosphate. Its function is as follows. Catalyzes the attachment of proline to tRNA(Pro) in a two-step reaction: proline is first activated by ATP to form Pro-AMP and then transferred to the acceptor end of tRNA(Pro). As ProRS can inadvertently accommodate and process non-cognate amino acids such as alanine and cysteine, to avoid such errors it has two additional distinct editing activities against alanine. One activity is designated as 'pretransfer' editing and involves the tRNA(Pro)-independent hydrolysis of activated Ala-AMP. The other activity is designated 'posttransfer' editing and involves deacylation of mischarged Ala-tRNA(Pro). The misacylated Cys-tRNA(Pro) is not edited by ProRS. This Xylella fastidiosa (strain 9a5c) protein is Proline--tRNA ligase.